We begin with the raw amino-acid sequence, 54 residues long: UPF0235 protein in proC 3'region (54 aa).

The protein belongs to the UPF0235 family.

The protein is UPF0235 protein in proC 3'region of Vibrio alginolyticus.